Consider the following 730-residue polypeptide: Pheromone-processing carboxypeptidase KEX1 (730 aa).

Residues 1 to 19 form the signal peptide; sequence MLHATVLPILLWLATLAYG. Residues 20–599 lie on the Lumenal side of the membrane; sequence FDRKEFLVDG…DEDEEGSNFK (580 aa). The N-linked (GlcNAc...) asparagine glycan is linked to Asn-60. Active-site residues include Ser-181, Asp-376, and His-441. The segment at 475 to 590 is disordered; sequence SSKDGDIDGY…LETGGEYYQD (116 aa). Positions 486 to 497 are enriched in basic and acidic residues; the sequence is EDDKSQDENKDN. Asn-497 and Asn-507 each carry an N-linked (GlcNAc...) asparagine glycan. A compositionally biased stretch (acidic residues) spans 498-514; sequence ESEDESEDENDSDDESD. Basic and acidic residues predominate over residues 515 to 526; the sequence is GKEGDKQENKPD. Acidic residues-rich tracts occupy residues 527–557 and 579–590; these read DSDD…DGDD and NDLETGGEYYQD. A helical membrane pass occupies residues 600 to 620; that stretch reads AFFLILSLVSAFIIVAAFYIS. Over 621 to 730 the chain is Cytoplasmic; that stretch reads DYIKSRRHPI…DIELQDIERH (110 aa). Residues 684–730 are disordered; it reads EDEEQLEGVVPESTRKSKKGSKKKGKYFSVPNDDSAEDIELQDIERH. Positions 699–709 are enriched in basic residues; the sequence is KSKKGSKKKGK. Positions 717–730 are enriched in acidic residues; it reads DSAEDIELQDIERH.

The protein belongs to the peptidase S10 family.

The protein localises to the golgi apparatus. It is found in the trans-Golgi network membrane. The catalysed reaction is Preferential release of a C-terminal arginine or lysine residue.. In terms of biological role, protease with a carboxypeptidase B-like function involved in the C-terminal processing of the lysine and arginine residues from protein precursors. Promotes cell fusion and is involved in the programmed cell death. This chain is Pheromone-processing carboxypeptidase KEX1 (KEX1), found in Candida glabrata (strain ATCC 2001 / BCRC 20586 / JCM 3761 / NBRC 0622 / NRRL Y-65 / CBS 138) (Yeast).